The following is a 200-amino-acid chain: Peptidyl-tRNA hydrolase (200 aa).

Y14 is a tRNA binding site. H19 serves as the catalytic Proton acceptor. Positions 64, 66, and 112 each coordinate tRNA.

It belongs to the PTH family. Monomer.

Its subcellular location is the cytoplasm. The catalysed reaction is an N-acyl-L-alpha-aminoacyl-tRNA + H2O = an N-acyl-L-amino acid + a tRNA + H(+). Its function is as follows. Hydrolyzes ribosome-free peptidyl-tRNAs (with 1 or more amino acids incorporated), which drop off the ribosome during protein synthesis, or as a result of ribosome stalling. Functionally, catalyzes the release of premature peptidyl moieties from peptidyl-tRNA molecules trapped in stalled 50S ribosomal subunits, and thus maintains levels of free tRNAs and 50S ribosomes. The chain is Peptidyl-tRNA hydrolase from Maricaulis maris (strain MCS10) (Caulobacter maris).